A 532-amino-acid polypeptide reads, in one-letter code: CTP synthase (532 aa).

An amidoligase domain region spans residues 1-267 (MAKFVFVTGG…HGLVLDQLQI (267 aa)). CTP is bound at residue Ser-13. Ser-13 is a UTP binding site. 14–19 (GLGKGI) provides a ligand contact to ATP. L-glutamine is bound at residue Tyr-54. Asp-71 contacts ATP. Positions 71 and 141 each coordinate Mg(2+). CTP contacts are provided by residues 148–150 (DIE), 188–193 (KTKPIQ), and Lys-224. Residues 188–193 (KTKPIQ) and Lys-224 contribute to the UTP site. The region spanning 292 to 532 (EVTFVGKYIE…GFVEAIVNNK (241 aa)) is the Glutamine amidotransferase type-1 domain. Position 354 (Gly-354) interacts with L-glutamine. Cys-381 acts as the Nucleophile; for glutamine hydrolysis in catalysis. Residues 382-385 (LGMQ), Glu-405, and Arg-462 each bind L-glutamine. Residues His-507 and Glu-509 contribute to the active site.

It belongs to the CTP synthase family. Homotetramer.

It catalyses the reaction UTP + L-glutamine + ATP + H2O = CTP + L-glutamate + ADP + phosphate + 2 H(+). The catalysed reaction is L-glutamine + H2O = L-glutamate + NH4(+). The enzyme catalyses UTP + NH4(+) + ATP = CTP + ADP + phosphate + 2 H(+). Its pathway is pyrimidine metabolism; CTP biosynthesis via de novo pathway; CTP from UDP: step 2/2. Its activity is regulated as follows. Allosterically activated by GTP, when glutamine is the substrate; GTP has no effect on the reaction when ammonia is the substrate. The allosteric effector GTP functions by stabilizing the protein conformation that binds the tetrahedral intermediate(s) formed during glutamine hydrolysis. Inhibited by the product CTP, via allosteric rather than competitive inhibition. Catalyzes the ATP-dependent amination of UTP to CTP with either L-glutamine or ammonia as the source of nitrogen. Regulates intracellular CTP levels through interactions with the four ribonucleotide triphosphates. The sequence is that of CTP synthase from Mesoplasma florum (strain ATCC 33453 / NBRC 100688 / NCTC 11704 / L1) (Acholeplasma florum).